The following is a 627-amino-acid chain: MRKFGGSLFGVSLLLSVLLAAATAAAEYYNYGSALDKTFLFFEAQRSGKLPAAQRVKWRGPSGLKDGLAQGVSLEGGYYDAGDHVKFGLPMAFAVTMLSWAAVDNRKELSSSNQMQQTLWSIRWGTDYFIKAHPQPNVLWGQVGDGESDHYCWERPEDMTTSRTAYKLDPYHPGSDLAGETAAALAAASLAFKPFNSSYSALLLSHAKELFSFADKYRGLYTNSIPNAKAFYMSSGYSDELLWAAAWLHRATGDQYYLKYAMDNSGYMGGTGWGVKEFSWDNKYAGVQILLSKILLEGKGGIYTSTLKQYQTKADYFACACLKKNGGYNIQTTPGGLMYVREWNNLQYASAAAYLLAVYSDYLSAANAKLNCPDGLVQPQGLLDFARSQADYILGKNRQGMSYVVGYGPKYPIRVHHRGSSIPSIFAQRSSVSCVQGFDSWYRRSQGDPNVIYGALVGGPDENDNYSDDRSNYEQSEPTLSGTAPLVGLFAKLYGGSLGSYGGGSYKPYETTKPAASSYKATPTTYSPKQSGAQIEFLHSITSNWIAGNTRYYRHKVIIKNNSQKPISDLKLKIEDLSGPIWGLNPTGQKYTYQLPQWQKTLRAGQAYDFVYVQGGPQAKVSVLSYN.

An N-terminal signal peptide occupies residues Met1–Ala26. The active-site Nucleophile is the Asp83. N-linked (GlcNAc...) asparagine glycosylation is present at Asn196. Residue His416 is part of the active site. Asn465 carries an N-linked (GlcNAc...) asparagine glycan. Residues Asp468 and Glu477 contribute to the active site. Residue Asn561 is glycosylated (N-linked (GlcNAc...) asparagine).

It belongs to the glycosyl hydrolase 9 (cellulase E) family.

It is found in the secreted. It carries out the reaction Endohydrolysis of (1-&gt;4)-beta-D-glucosidic linkages in cellulose, lichenin and cereal beta-D-glucans.. The chain is Endoglucanase 5 from Arabidopsis thaliana (Mouse-ear cress).